The chain runs to 71 residues: Ceratotoxin-D (71 aa).

An N-terminal signal peptide occupies residues 1 to 23 (MANLKAVFLICILAFIAFHCVVG). Residues 24–35 (APTAEDSIVVKR) constitute a propeptide that is removed on maturation.

In terms of assembly, homomer of four to six subunits.

Its subcellular location is the secreted. In terms of biological role, female-specific peptides with potent activity against Gram-positive and Gram-negative bacteria. They have as well hemolytic activity. This Ceratitis capitata (Mediterranean fruit fly) protein is Ceratotoxin-D (CTXD).